We begin with the raw amino-acid sequence, 717 residues long: PAN2-PAN3 deadenylation complex subunit PAN3 (717 aa).

The C3H1-type zinc-finger motif lies at 8-37 (WARDVPCRNVIIYGFCKKKTEGCPFKHDDD). The disordered stretch occupies residues 37 to 100 (DDIATPTSTP…HTGSKSQVPK (64 aa)). Residues 62 to 90 (PSKISVSSLPSLNSQPSSTAPTSAPNATA) show a composition bias toward low complexity. Residues 91–100 (HTGSKSQVPK) show a composition bias toward polar residues. Residues 323–585 (QLFPSGGNLP…ATIIEKYIGL (263 aa)) are pseudokinase domain. ATP is bound by residues Arg-378, 428 to 435 (DYYPNATS), and 482 to 483 (DK). The stretch at 586 to 624 (DVVFKVMEAQQTYSEYAENVLSRELENGRLFRLICKLNF) forms a coiled coil. Positions 625–717 (IFGRVENRLD…VDKTFRAMTL (93 aa)) are knob domain.

The protein belongs to the protein kinase superfamily. PAN3 family. In terms of assembly, homodimer. Forms a heterotrimer with a catalytic subunit PAN2 to form the poly(A)-nuclease (PAN) deadenylation complex. Interacts (via PAM-2 motif) with poly(A)-binding protein PAB1 (via PABC domain), conferring substrate specificity of the enzyme complex.

It localises to the cytoplasm. Functionally, regulatory subunit of the poly(A)-nuclease (PAN) deadenylation complex, one of two cytoplasmic mRNA deadenylases involved in mRNA turnover. PAN specifically shortens poly(A) tails of RNA and the activity is stimulated by poly(A)-binding protein PAB1. PAN deadenylation is followed by rapid degradation of the shortened mRNA tails by the CCR4-NOT complex. Deadenylated mRNAs are then degraded by two alternative mechanisms, namely exosome-mediated 3'-5' exonucleolytic degradation, or deadenylation-dependent mRNA decaping and subsequent 5'-3' exonucleolytic degradation by XRN1. May also be involved in post-transcriptional maturation of mRNA poly(A) tails. PAN3 acts as a positive regulator for PAN activity, recruiting the catalytic subunit PAN2 to mRNA via its interaction with RNA and with PAB1. The sequence is that of PAN2-PAN3 deadenylation complex subunit PAN3 from Candida glabrata (strain ATCC 2001 / BCRC 20586 / JCM 3761 / NBRC 0622 / NRRL Y-65 / CBS 138) (Yeast).